Consider the following 419-residue polypeptide: uncharacterized protein (419 aa).

In terms of domain architecture, Obg spans 29 to 236 (PKFQDKIRIR…KLIELELKTI (208 aa)). The OBG-type G domain maps to 237–414 (CEIGLVGLPN…LVRGMTQLLQ (178 aa)). GTP-binding positions include 243-250 (GLPNAGKS), 295-299 (DIPGI), and 364-367 (ANKA).

Belongs to the TRAFAC class OBG-HflX-like GTPase superfamily. OBG GTPase family.

Its subcellular location is the mitochondrion. This is an uncharacterized protein from Schizosaccharomyces pombe (strain 972 / ATCC 24843) (Fission yeast).